We begin with the raw amino-acid sequence, 229 residues long: Triosephosphate isomerase (229 aa).

6–8 provides a ligand contact to substrate; it reads NLK. H85 serves as the catalytic Electrophile. E152 acts as the Proton acceptor in catalysis. Positions 158 and 188 each coordinate substrate.

It belongs to the triosephosphate isomerase family. As to quaternary structure, homodimer.

The protein localises to the cytoplasm. It carries out the reaction D-glyceraldehyde 3-phosphate = dihydroxyacetone phosphate. It functions in the pathway carbohydrate biosynthesis; gluconeogenesis. The protein operates within carbohydrate degradation; glycolysis; D-glyceraldehyde 3-phosphate from glycerone phosphate: step 1/1. In terms of biological role, involved in the gluconeogenesis. Catalyzes stereospecifically the conversion of dihydroxyacetone phosphate (DHAP) to D-glyceraldehyde-3-phosphate (G3P). The polypeptide is Triosephosphate isomerase (Campylobacter curvus (strain 525.92)).